A 310-amino-acid polypeptide reads, in one-letter code: HPr kinase/phosphorylase (310 aa).

Residues histidine 138 and lysine 159 contribute to the active site. 153–160 is a binding site for ATP; sequence GASGIGKS. Residue serine 160 participates in Mg(2+) binding. Aspartate 177 acts as the Proton acceptor; for phosphorylation activity. Proton donor; for dephosphorylation activity in catalysis. The interval 201–210 is important for the catalytic mechanism of both phosphorylation and dephosphorylation; sequence IEIRGVGIID. Residue glutamate 202 coordinates Mg(2+). The active site involves arginine 243. Positions 264–269 are important for the catalytic mechanism of dephosphorylation; the sequence is PVKTGR.

Belongs to the HPrK/P family. Homohexamer. Requires Mg(2+) as cofactor.

The enzyme catalyses [HPr protein]-L-serine + ATP = [HPr protein]-O-phospho-L-serine + ADP + H(+). It catalyses the reaction [HPr protein]-O-phospho-L-serine + phosphate + H(+) = [HPr protein]-L-serine + diphosphate. Catalyzes the ATP- as well as the pyrophosphate-dependent phosphorylation of a specific serine residue in HPr, a phosphocarrier protein of the phosphoenolpyruvate-dependent sugar phosphotransferase system (PTS). HprK/P also catalyzes the pyrophosphate-producing, inorganic phosphate-dependent dephosphorylation (phosphorolysis) of seryl-phosphorylated HPr (P-Ser-HPr). The two antagonistic activities of HprK/P are regulated by several intracellular metabolites, which change their concentration in response to the absence or presence of rapidly metabolisable carbon sources (glucose, fructose, etc.) in the growth medium. Therefore, by controlling the phosphorylation state of HPr, HPrK/P is a sensor enzyme that plays a major role in the regulation of carbon metabolism and sugar transport: it mediates carbon catabolite repression (CCR), and regulates PTS-catalyzed carbohydrate uptake and inducer exclusion. This chain is HPr kinase/phosphorylase, found in Lactococcus lactis subsp. cremoris (strain MG1363).